We begin with the raw amino-acid sequence, 397 residues long: uncharacterized protein (397 aa).

The next 4 helical transmembrane spans lie at Leu255–Ala275, Met284–Ala304, Leu308–Leu328, and Val370–Gly390.

The protein localises to the cell membrane. This is an uncharacterized protein from Methanocaldococcus jannaschii (strain ATCC 43067 / DSM 2661 / JAL-1 / JCM 10045 / NBRC 100440) (Methanococcus jannaschii).